An 85-amino-acid chain; its full sequence is Large ribosomal subunit protein bL31B (85 aa).

The protein belongs to the bacterial ribosomal protein bL31 family. Type B subfamily. In terms of assembly, part of the 50S ribosomal subunit.

This is Large ribosomal subunit protein bL31B from Stutzerimonas stutzeri (strain A1501) (Pseudomonas stutzeri).